Here is a 338-residue protein sequence, read N- to C-terminus: Phenylalanine--tRNA ligase alpha subunit (338 aa).

A Mg(2+)-binding site is contributed by E252.

It belongs to the class-II aminoacyl-tRNA synthetase family. Phe-tRNA synthetase alpha subunit type 1 subfamily. Tetramer of two alpha and two beta subunits. Requires Mg(2+) as cofactor.

The protein localises to the cytoplasm. The catalysed reaction is tRNA(Phe) + L-phenylalanine + ATP = L-phenylalanyl-tRNA(Phe) + AMP + diphosphate + H(+). The chain is Phenylalanine--tRNA ligase alpha subunit from Pseudomonas paraeruginosa (strain DSM 24068 / PA7) (Pseudomonas aeruginosa (strain PA7)).